The sequence spans 363 residues: 3-isopropylmalate dehydrogenase (363 aa).

78–91 lines the NAD(+) pocket; that stretch reads GKRWDHLPINERPE. Positions 99, 109, 138, and 227 each coordinate substrate. Residues Asp-227, Asp-251, and Asp-255 each contribute to the Mg(2+) site. 285 to 297 provides a ligand contact to NAD(+); sequence GSAPDIAGKNTAN.

This sequence belongs to the isocitrate and isopropylmalate dehydrogenases family. LeuB type 1 subfamily. As to quaternary structure, homodimer. The cofactor is Mg(2+). Mn(2+) serves as cofactor.

It localises to the cytoplasm. The catalysed reaction is (2R,3S)-3-isopropylmalate + NAD(+) = 4-methyl-2-oxopentanoate + CO2 + NADH. It functions in the pathway amino-acid biosynthesis; L-leucine biosynthesis; L-leucine from 3-methyl-2-oxobutanoate: step 3/4. Functionally, catalyzes the oxidation of 3-carboxy-2-hydroxy-4-methylpentanoate (3-isopropylmalate) to 3-carboxy-4-methyl-2-oxopentanoate. The product decarboxylates to 4-methyl-2 oxopentanoate. This chain is 3-isopropylmalate dehydrogenase, found in Buchnera aphidicola subsp. Uroleucon helianthicola.